A 306-amino-acid chain; its full sequence is Protease HtpX homolog (306 aa).

The next 2 helical transmembrane spans lie at 10–30 (TTLL…ATGG) and 33–53 (QTLS…YWFS). Histidine 135 is a binding site for Zn(2+). Glutamate 136 is a catalytic residue. Zn(2+) is bound at residue histidine 139. 2 helical membrane-spanning segments follow: residues 149–169 (AIAS…MYFG) and 181–201 (GLGL…ASLI). Glutamate 210 is a Zn(2+) binding site.

This sequence belongs to the peptidase M48B family. Zn(2+) serves as cofactor.

It is found in the cell membrane. This chain is Protease HtpX homolog, found in Bifidobacterium longum (strain NCC 2705).